Here is a 276-residue protein sequence, read N- to C-terminus: Glutamate 5-kinase (276 aa).

Lys-14 contacts ATP. Residues Ser-54, Asp-141, and Asn-157 each contribute to the substrate site. Residues 177 to 178 (SD) and 219 to 225 (TGGMLTK) each bind ATP.

It belongs to the glutamate 5-kinase family.

It localises to the cytoplasm. It catalyses the reaction L-glutamate + ATP = L-glutamyl 5-phosphate + ADP. It participates in amino-acid biosynthesis; L-proline biosynthesis; L-glutamate 5-semialdehyde from L-glutamate: step 1/2. Functionally, catalyzes the transfer of a phosphate group to glutamate to form L-glutamate 5-phosphate. The polypeptide is Glutamate 5-kinase (Listeria monocytogenes serotype 4a (strain HCC23)).